A 515-amino-acid chain; its full sequence is 1-pyrroline-5-carboxylate dehydrogenase (515 aa).

Active-site residues include glutamate 286 and cysteine 320.

This sequence belongs to the aldehyde dehydrogenase family. RocA subfamily.

The catalysed reaction is L-glutamate 5-semialdehyde + NAD(+) + H2O = L-glutamate + NADH + 2 H(+). Its pathway is amino-acid degradation; L-proline degradation into L-glutamate; L-glutamate from L-proline: step 2/2. The polypeptide is 1-pyrroline-5-carboxylate dehydrogenase (Bacillus mycoides (strain KBAB4) (Bacillus weihenstephanensis)).